The primary structure comprises 178 residues: MTPKQLMNDEEIRRALKRIAHEIVERNAGANLVSLVGIHRRGVPLARRLAAMIAETEHVQVPVGELDIGLYRDDLHSRGPAPILGRTILPELGKRVVVLVDDVLYTGRTIRAALNELSDWGRPSAIQLAVLVDRGHRELPIRADFVGKNIPTAKNERVDVQLSEIDAAQDSVVIVQED.

The PRPP-binding motif lies at 97 to 109 (VVLVDDVLYTGRT).

This sequence belongs to the purine/pyrimidine phosphoribosyltransferase family. PyrR subfamily.

The enzyme catalyses UMP + diphosphate = 5-phospho-alpha-D-ribose 1-diphosphate + uracil. Its function is as follows. Regulates the transcription of the pyrimidine nucleotide (pyr) operon in response to exogenous pyrimidines. Also displays a weak uracil phosphoribosyltransferase activity which is not physiologically significant. The chain is Bifunctional protein PyrR from Herpetosiphon aurantiacus (strain ATCC 23779 / DSM 785 / 114-95).